The chain runs to 294 residues: Antiviral protein alpha (294 aa).

A signal peptide spans 1–24; sequence MKMMVVVVVMMLSWLILKPPSTWA. 2 disulfides stabilise this stretch: cysteine 58/cysteine 282 and cysteine 108/cysteine 130. Glutamate 199 is a catalytic residue. Positions 286–294 are excised as a propeptide; sequence YQSAMFPHL.

The protein belongs to the ribosome-inactivating protein family. Type 1 RIP subfamily. Monomer.

The protein resides in the secreted. It is found in the cell wall. The catalysed reaction is Endohydrolysis of the N-glycosidic bond at one specific adenosine on the 28S rRNA.. Its function is as follows. Inhibits viral infection of plants, and protein synthesis in vitro. Has also been shown to inhibit the replication of mammalian viruses. The protein may provide a means of cellular suicide upon invasion by a virus. This Phytolacca americana (American pokeweed) protein is Antiviral protein alpha.